We begin with the raw amino-acid sequence, 164 residues long: uncharacterized protein (164 aa).

Over residues 1–29 the composition is skewed to polar residues; the sequence is MLCVRSSSSNLESDTYLSRYSTRASAGTG. The segment at 1–62 is disordered; sequence MLCVRSSSSN…SKPSNNKNID (62 aa). Positions 43 to 62 are enriched in low complexity; the sequence is SSDSSSSSSESKPSNNKNID.

This is an uncharacterized protein from Schizosaccharomyces pombe (strain 972 / ATCC 24843) (Fission yeast).